The chain runs to 202 residues: ATP-dependent Clp protease proteolytic subunit (202 aa).

Catalysis depends on Ser-101, which acts as the Nucleophile. His-126 is a catalytic residue.

It belongs to the peptidase S14 family. As to quaternary structure, component of the chloroplastic Clp protease core complex.

The protein localises to the plastid. Its subcellular location is the chloroplast stroma. The enzyme catalyses Hydrolysis of proteins to small peptides in the presence of ATP and magnesium. alpha-casein is the usual test substrate. In the absence of ATP, only oligopeptides shorter than five residues are hydrolyzed (such as succinyl-Leu-Tyr-|-NHMec, and Leu-Tyr-Leu-|-Tyr-Trp, in which cleavage of the -Tyr-|-Leu- and -Tyr-|-Trp bonds also occurs).. Its function is as follows. Cleaves peptides in various proteins in a process that requires ATP hydrolysis. Has a chymotrypsin-like activity. Plays a major role in the degradation of misfolded proteins. This chain is ATP-dependent Clp protease proteolytic subunit, found in Buxus microphylla (Littleleaf boxwood).